A 124-amino-acid chain; its full sequence is Small ribosomal subunit protein eS6 (124 aa).

It belongs to the eukaryotic ribosomal protein eS6 family.

The sequence is that of Small ribosomal subunit protein eS6 from Methanococcus maripaludis (strain DSM 14266 / JCM 13030 / NBRC 101832 / S2 / LL).